The following is a 662-amino-acid chain: Chromosomal replication initiator protein DnaA (662 aa).

Positions 1–93 (MDDEQNVLAT…QVEGLGVRIA (93 aa)) are domain I, interacts with DnaA modulators. Residues 93-322 (AAPATPTAER…STPAPANSSA (230 aa)) are domain II. A compositionally biased stretch (low complexity) spans 96–105 (ATPTAERAAA). A disordered region spans residues 96–294 (ATPTAERAAA…SDGPVERDDE (199 aa)). The segment covering 114-123 (SRPERPRGER) has biased composition (basic and acidic residues). The segment covering 166–199 (PPAAEYTPAAEYTPAAEYTPAAEYSPEPEYTPAT) has biased composition (low complexity). Basic and acidic residues-rich tracts occupy residues 236 to 248 (TPRR…RRDA) and 261 to 290 (PGDR…GPVE). The domain III, AAA+ region stretch occupies residues 323–539 (SLNAKYTFET…GALIRVTAFA (217 aa)). Residues G367, G369, K370, and T371 each contribute to the ATP site. Residues 540 to 662 (SLNGQPLDLS…LTARIKQRSR (123 aa)) form a domain IV, binds dsDNA region.

The protein belongs to the DnaA family. Oligomerizes as a right-handed, spiral filament on DNA at oriC.

It is found in the cytoplasm. Functionally, plays an essential role in the initiation and regulation of chromosomal replication. ATP-DnaA binds to the origin of replication (oriC) to initiate formation of the DNA replication initiation complex once per cell cycle. Binds the DnaA box (a 9 base pair repeat at the origin) and separates the double-stranded (ds)DNA. Forms a right-handed helical filament on oriC DNA; dsDNA binds to the exterior of the filament while single-stranded (ss)DNA is stabiized in the filament's interior. The ATP-DnaA-oriC complex binds and stabilizes one strand of the AT-rich DNA unwinding element (DUE), permitting loading of DNA polymerase. After initiation quickly degrades to an ADP-DnaA complex that is not apt for DNA replication. Binds acidic phospholipids. This is Chromosomal replication initiator protein DnaA from Nocardia farcinica (strain IFM 10152).